The chain runs to 407 residues: Imidazolonepropionase (407 aa).

Fe(3+)-binding residues include H74 and H76. Residues H74 and H76 each contribute to the Zn(2+) site. R83, Y146, and H179 together coordinate 4-imidazolone-5-propanoate. Residue Y146 coordinates N-formimidoyl-L-glutamate. H244 is a Fe(3+) binding site. Residue H244 coordinates Zn(2+). 4-imidazolone-5-propanoate is bound at residue Q247. Fe(3+) is bound at residue D319. Residue D319 participates in Zn(2+) binding. Positions 321 and 323 each coordinate N-formimidoyl-L-glutamate. T324 provides a ligand contact to 4-imidazolone-5-propanoate.

This sequence belongs to the metallo-dependent hydrolases superfamily. HutI family. Requires Zn(2+) as cofactor. Fe(3+) is required as a cofactor.

It is found in the cytoplasm. It carries out the reaction 4-imidazolone-5-propanoate + H2O = N-formimidoyl-L-glutamate. The protein operates within amino-acid degradation; L-histidine degradation into L-glutamate; N-formimidoyl-L-glutamate from L-histidine: step 3/3. In terms of biological role, catalyzes the hydrolytic cleavage of the carbon-nitrogen bond in imidazolone-5-propanoate to yield N-formimidoyl-L-glutamate. It is the third step in the universal histidine degradation pathway. This Salmonella typhi protein is Imidazolonepropionase.